Reading from the N-terminus, the 81-residue chain is Conotoxin Im016 (81 aa).

The N-terminal stretch at 1–21 (MSTLGMMLLILLLLVPLATFA) is a signal peptide. Residues 22–31 (DDGPTMRGHR) constitute a propeptide that is removed on maturation.

Belongs to the conotoxin N superfamily. In terms of processing, contains 5 disulfide bonds. As to expression, expressed by the venom duct.

It is found in the secreted. Probable neurotoxin. In Conus imperialis (Imperial cone), this protein is Conotoxin Im016.